The primary structure comprises 611 residues: Angiotensin-converting enzyme (611 aa).

A signal peptide spans 1-17 (MKLLVVTILAGLAVCHG). Residues 19 to 607 (TKEEIVATEY…VESLCHQRYK (589 aa)) form the Peptidase M2 domain. Asn53 is a glycosylation site (N-linked (GlcNAc...) asparagine). A disulfide bridge links Cys133 with Cys141. An N-linked (GlcNAc...) asparagine glycan is attached at Asn196. A disulfide bridge links Cys336 with Cys354. Position 367 (His367) interacts with Zn(2+). The active-site Proton acceptor is the Glu368. 2 residues coordinate Zn(2+): His371 and Glu395. His497 functions as the Proton donor in the catalytic mechanism. The cysteines at positions 522 and 540 are disulfide-linked. A glycan (N-linked (GlcNAc...) asparagine) is linked at Asn531.

The protein belongs to the peptidase M2 family. Zn(2+) is required as a cofactor. In terms of tissue distribution, expressed in the compound ganglion and in the posterior region of the midgut.

Its subcellular location is the secreted. It is found in the extracellular space. The enzyme catalyses Release of a C-terminal dipeptide, oligopeptide-|-Xaa-Yaa, when Xaa is not Pro, and Yaa is neither Asp nor Glu. Thus, conversion of angiotensin I to angiotensin II, with increase in vasoconstrictor activity, but no action on angiotensin II.. Functionally, involved in the specific maturation or degradation of a number of bioactive peptides. This is Angiotensin-converting enzyme (ACE) from Haematobia irritans exigua (Buffalo fly).